Here is a 160-residue protein sequence, read N- to C-terminus: Heme transporter hrg-5 (160 aa).

Residues 21–41 (IALTILDILIGFSNILSYAIQ) traverse the membrane as a helical segment. N-linked (GlcNAc...) asparagine glycosylation is present at asparagine 44. The next 3 helical transmembrane spans lie at 47-67 (ALTL…MFLA), 89-109 (ITLG…AGVT), and 123-142 (FTGL…ALLA). Asparagine 144 is a glycosylation site (N-linked (GlcNAc...) asparagine).

It belongs to the HRG family.

Its subcellular location is the membrane. In terms of biological role, heme transporter. The chain is Heme transporter hrg-5 (hrg-5) from Caenorhabditis elegans.